We begin with the raw amino-acid sequence, 142 residues long: Transcriptional regulator MraZ (142 aa).

2 SpoVT-AbrB domains span residues 5 to 51 (ASSL…PRTE) and 77 to 120 (AMDV…DKAT).

This sequence belongs to the MraZ family. In terms of assembly, forms oligomers.

It localises to the cytoplasm. Its subcellular location is the nucleoid. The protein is Transcriptional regulator MraZ of Delftia acidovorans (strain DSM 14801 / SPH-1).